We begin with the raw amino-acid sequence, 230 residues long: Ribosomal RNA small subunit methyltransferase G (230 aa).

S-adenosyl-L-methionine contacts are provided by residues Gly80, Phe85, 131-132 (VE), and Arg145.

The protein belongs to the methyltransferase superfamily. RNA methyltransferase RsmG family.

It is found in the cytoplasm. It catalyses the reaction guanosine(527) in 16S rRNA + S-adenosyl-L-methionine = N(7)-methylguanosine(527) in 16S rRNA + S-adenosyl-L-homocysteine. In terms of biological role, specifically methylates the N7 position of guanine in position 527 of 16S rRNA. The protein is Ribosomal RNA small subunit methyltransferase G of Novosphingobium aromaticivorans (strain ATCC 700278 / DSM 12444 / CCUG 56034 / CIP 105152 / NBRC 16084 / F199).